The sequence spans 34 residues: Photosystem II reaction center protein M (34 aa).

A helical transmembrane segment spans residues 5-25 (ILAFIATALFILIPTAFLLIL).

Belongs to the PsbM family. PSII is composed of 1 copy each of membrane proteins PsbA, PsbB, PsbC, PsbD, PsbE, PsbF, PsbH, PsbI, PsbJ, PsbK, PsbL, PsbM, PsbT, PsbX, PsbY, PsbZ, Psb30/Ycf12, at least 3 peripheral proteins of the oxygen-evolving complex and a large number of cofactors. It forms dimeric complexes.

Its subcellular location is the plastid. The protein localises to the chloroplast thylakoid membrane. In terms of biological role, one of the components of the core complex of photosystem II (PSII). PSII is a light-driven water:plastoquinone oxidoreductase that uses light energy to abstract electrons from H(2)O, generating O(2) and a proton gradient subsequently used for ATP formation. It consists of a core antenna complex that captures photons, and an electron transfer chain that converts photonic excitation into a charge separation. This subunit is found at the monomer-monomer interface. In Angiopteris evecta (Mule's foot fern), this protein is Photosystem II reaction center protein M.